The primary structure comprises 113 residues: ATP-dependent Clp protease adapter protein ClpS (113 aa).

The segment at 1 to 26 is disordered; the sequence is MLMQPLMMSDNPDDESDLGLLTKTRP.

This sequence belongs to the ClpS family. As to quaternary structure, binds to the N-terminal domain of the chaperone ClpA.

Involved in the modulation of the specificity of the ClpAP-mediated ATP-dependent protein degradation. The polypeptide is ATP-dependent Clp protease adapter protein ClpS (Ruegeria sp. (strain TM1040) (Silicibacter sp.)).